We begin with the raw amino-acid sequence, 353 residues long: Mitochondrial distribution and morphology protein 12 (353 aa).

Positions 1–330 constitute an SMP-LTD domain; sequence MSFDIKWENL…WPSWICLDMN (330 aa). Acidic residues-rich tracts occupy residues 64 to 75, 84 to 103, and 330 to 342; these read DEFYEDTTDSPE, TGDD…DDDG, and NDDD…EENP. Disordered stretches follow at residues 64–140 and 330–353; these read DEFY…NRSR and NDDD…HVGS.

This sequence belongs to the MDM12 family. Component of the ER-mitochondria encounter structure (ERMES) or MDM complex, composed of MMM1, MDM10, MDM12 and MDM34. An MMM1 homodimer associates with one molecule of MDM12 on each side in a pairwise head-to-tail manner, and the SMP-LTD domains of MMM1 and MDM12 generate a continuous hydrophobic tunnel for phospholipid trafficking.

It is found in the mitochondrion outer membrane. The protein localises to the endoplasmic reticulum membrane. Component of the ERMES/MDM complex, which serves as a molecular tether to connect the endoplasmic reticulum (ER) and mitochondria. Components of this complex are involved in the control of mitochondrial shape and protein biogenesis, and function in nonvesicular lipid trafficking between the ER and mitochondria. MDM12 is required for the interaction of the ER-resident membrane protein MMM1 and the outer mitochondrial membrane-resident beta-barrel protein MDM10. The MDM12-MMM1 subcomplex functions in the major beta-barrel assembly pathway that is responsible for biogenesis of all mitochondrial outer membrane beta-barrel proteins, and acts in a late step after the SAM complex. The MDM10-MDM12-MMM1 subcomplex further acts in the TOM40-specific pathway after the action of the MDM12-MMM1 complex. Essential for establishing and maintaining the structure of mitochondria and maintenance of mtDNA nucleoids. In Candida tropicalis (strain ATCC MYA-3404 / T1) (Yeast), this protein is Mitochondrial distribution and morphology protein 12.